A 3902-amino-acid chain; its full sequence is Hybrid PKS-NRPS synthetase pynA (3902 aa).

The segment at Met-1–Met-25 is disordered. A Ketosynthase family 3 (KS3) domain is found at Ala-29–Ala-441. Catalysis depends on for beta-ketoacyl synthase activity residues Cys-201, His-324, and His-362. The interval Val-555–Val-868 is malonyl-CoA:ACP transacylase (MAT) domain. The active-site For malonyltransferase activity is the Ser-647. The segment at His-945–Leu-1080 is N-terminal hotdog fold. The interval His-945 to Lys-1256 is dehydratase (DH) domain. One can recognise a PKS/mFAS DH domain in the interval His-945–Asp-1258. The active-site Proton acceptor; for dehydratase activity is His-977. Residues Gln-1100–Asp-1258 form a C-terminal hotdog fold region. Asp-1164 acts as the Proton donor; for dehydratase activity in catalysis. Positions Gly-1629 to Leu-1945 are enoyl reductase (ER) domain. The ketoreductase (KR) domain stretch occupies residues Thr-1971 to Ile-2143. The Carrier 1 domain occupies Glu-2251–Ile-2328. Ser-2288 carries the O-(pantetheine 4'-phosphoryl)serine modification. Residues Lys-2337–Glu-2350 show a composition bias toward basic and acidic residues. The segment at Lys-2337–Pro-2364 is disordered. The condensation (C) domain 7 stretch occupies residues Val-2374–Glu-2816. The interval Ser-2836 to Ile-3248 is adenylation (A) domain 8. The Carrier 2 domain maps to Gly-3391–Leu-3467. Ser-3427 carries the O-(pantetheine 4'-phosphoryl)serine modification. The interval Leu-3515–Thr-3774 is thioesterase (TE) domain.

This sequence in the C-terminal section; belongs to the NRP synthetase family.

Its pathway is secondary metabolite biosynthesis. Hybrid PKS-NRPS synthetase; part of the gene cluster that mediates the biosynthesis of pyranonigrins, a family of antioxidative compounds. The first step of pyranonigrins biosynthesis is performed by the hybrid PKS-NRPS synthetase that condenses 6 malonyl-CoA units to an acetyl starter unit, to form a 1,3,5-trioxotetradecane-6,8-dienyl-ACP. The enoyl reductase (ER) domain of pynA is likely to be functional during the first two rounds of polyketide chain extension, to generate the saturated C-C bonds of the alkyl side chain. PynA subsequently forms the amide bond between the acyl chain and L-serine. Although pynA has a terminal reductase domain, it appears to require the thioesterase pynI for the release of the straight-chain intermediate from pynA via the formation of a tetramic acid pyranonigrin J. The methyltransferase pynC then coverts pyranonigrin J to pyranonigrin I via N-methylation. The FAD-dependent monooxygenase pynG catalyzes an epoxidation-mediated cyclization to form the dihydro-gamma-pyrone moiety, followed by pynD-catalyzed oxidation of the alcohol to the ketone and enolization to yield the characteristic tetramic acid-fused gamma-pyrone core of pyranonigrin H. Pyranonigrin H is substrate of pynH for dehydration-mediated exo-methylene formation from the serine side chain to produce pyranonigrin E, before the oxidase pynE reduces the exo-methylene of pyranonigrin E into a pendant methyl to form pyranonigrin G. The FAD-linked oxidoreductase pynB performs the reverse reaction and converts pyranonigrin G back to pyranonigrin E. The polypeptide is Hybrid PKS-NRPS synthetase pynA (Aspergillus niger (strain ATCC MYA-4892 / CBS 513.88 / FGSC A1513)).